The primary structure comprises 145 residues: MGSVPTVIPGIVHCWMIHCLIGPFLFAIIYWSIFIEGMFFPQKYLDCQSVINLLCGSNQQKRIFKEKLRIYQVHIQEKIGCSKFNTLLLIYQLGSRHKINRQINDLLCNLCSKNYMIMLLYAEIIIYSSFSCVLSATIFLRGFLL.

2 consecutive transmembrane segments (helical) span residues 20–40 and 116–136; these read LIGP…GMFF and MIML…VLSA.

Its subcellular location is the membrane. This is an uncharacterized protein from Saccharomyces cerevisiae (strain ATCC 204508 / S288c) (Baker's yeast).